Consider the following 139-residue polypeptide: Ribonuclease P protein component (139 aa).

Belongs to the RnpA family. In terms of assembly, consists of a catalytic RNA component (M1 or rnpB) and a protein subunit.

It catalyses the reaction Endonucleolytic cleavage of RNA, removing 5'-extranucleotides from tRNA precursor.. Functionally, RNaseP catalyzes the removal of the 5'-leader sequence from pre-tRNA to produce the mature 5'-terminus. It can also cleave other RNA substrates such as 4.5S RNA. The protein component plays an auxiliary but essential role in vivo by binding to the 5'-leader sequence and broadening the substrate specificity of the ribozyme. The sequence is that of Ribonuclease P protein component from Chlamydia felis (strain Fe/C-56) (Chlamydophila felis).